Reading from the N-terminus, the 217-residue chain is Claudin-9 (217 aa).

The Cytoplasmic segment spans residues 1-7 (MASTGLE). Residues 8–28 (LLGMTLAVLGWLGTLVSCALP) form a helical membrane-spanning segment. Residues 29 to 81 (LWKVTAFIGNSIVVAQVVWEGLWMSCVVQSTGQMQCKVYDSLLALPQDLQAAR) lie on the Extracellular side of the membrane. A helical transmembrane segment spans residues 82 to 102 (ALCVIALLLALLGLLVAITGA). At 103 to 116 (QCTTCVEDEGAKAR) the chain is on the cytoplasmic side. The chain crosses the membrane as a helical span at residues 117–137 (IVLTAGVILLLAGILVLIPVC). At 138–159 (WTAHAIIQDFYNPLVAEALKRE) the chain is on the extracellular side. The chain crosses the membrane as a helical span at residues 160-180 (LGASLYLGWAAAALLMLGGGL). Topologically, residues 181–217 (LCCTCPPPQVERPRGPRLGYSIPSRSGASGLDKRDYV) are cytoplasmic. Residues 194-217 (RGPRLGYSIPSRSGASGLDKRDYV) are disordered.

This sequence belongs to the claudin family. Interacts with CLDN1, CD81 and OCLN. Expressed in the liver, in peripheral blood mononuclear cells and hepatocarcinoma cell lines.

The protein localises to the cell junction. The protein resides in the tight junction. It is found in the cell membrane. In terms of biological role, plays a major role in tight junction-specific obliteration of the intercellular space, through calcium-independent cell-adhesion activity. Functionally, (Microbial infection) Acts as a receptor for hepatitis C virus (HCV) entry into hepatic cells. This chain is Claudin-9 (CLDN9), found in Homo sapiens (Human).